The sequence spans 486 residues: Glycogen synthase (486 aa).

An ADP-alpha-D-glucose-binding site is contributed by lysine 20.

The protein belongs to the glycosyltransferase 1 family. Bacterial/plant glycogen synthase subfamily.

The enzyme catalyses [(1-&gt;4)-alpha-D-glucosyl](n) + ADP-alpha-D-glucose = [(1-&gt;4)-alpha-D-glucosyl](n+1) + ADP + H(+). Its pathway is glycan biosynthesis; glycogen biosynthesis. Its function is as follows. Synthesizes alpha-1,4-glucan chains using ADP-glucose. The protein is Glycogen synthase of Aeromonas hydrophila subsp. hydrophila (strain ATCC 7966 / DSM 30187 / BCRC 13018 / CCUG 14551 / JCM 1027 / KCTC 2358 / NCIMB 9240 / NCTC 8049).